We begin with the raw amino-acid sequence, 191 residues long: Fe/S biogenesis protein NfuA (191 aa).

Cysteine 149 and cysteine 152 together coordinate [4Fe-4S] cluster.

The protein belongs to the NfuA family. As to quaternary structure, homodimer. [4Fe-4S] cluster is required as a cofactor.

Involved in iron-sulfur cluster biogenesis. Binds a 4Fe-4S cluster, can transfer this cluster to apoproteins, and thereby intervenes in the maturation of Fe/S proteins. Could also act as a scaffold/chaperone for damaged Fe/S proteins. The protein is Fe/S biogenesis protein NfuA of Sodalis glossinidius (strain morsitans).